A 357-amino-acid chain; its full sequence is tRNA N6-adenosine threonylcarbamoyltransferase (357 aa).

Fe cation is bound by residues His-115 and His-119. Substrate-binding positions include 137-141 (LASGG), Asp-170, Gly-183, and Asn-281. Asp-309 contributes to the Fe cation binding site.

This sequence belongs to the KAE1 / TsaD family. Fe(2+) is required as a cofactor.

The protein localises to the cytoplasm. The enzyme catalyses L-threonylcarbamoyladenylate + adenosine(37) in tRNA = N(6)-L-threonylcarbamoyladenosine(37) in tRNA + AMP + H(+). In terms of biological role, required for the formation of a threonylcarbamoyl group on adenosine at position 37 (t(6)A37) in tRNAs that read codons beginning with adenine. Is involved in the transfer of the threonylcarbamoyl moiety of threonylcarbamoyl-AMP (TC-AMP) to the N6 group of A37, together with TsaE and TsaB. TsaD likely plays a direct catalytic role in this reaction. The polypeptide is tRNA N6-adenosine threonylcarbamoyltransferase (Nitrobacter hamburgensis (strain DSM 10229 / NCIMB 13809 / X14)).